The following is a 338-amino-acid chain: Ketol-acid reductoisomerase (NADP(+)) (338 aa).

Positions 1 to 181 (MRVFYDKDCD…GGGRTGIIET (181 aa)) constitute a KARI N-terminal Rossmann domain. Residues 24–27 (YGSQ), R47, S50, T52, and 82–85 (DEFQ) contribute to the NADP(+) site. Residue H107 is part of the active site. Residue G133 participates in NADP(+) binding. In terms of domain architecture, KARI C-terminal knotted spans 182-327 (TFKDETETDL…EKLRAMMPWI (146 aa)). Positions 190, 194, 226, and 230 each coordinate Mg(2+). S251 is a substrate binding site.

It belongs to the ketol-acid reductoisomerase family. Mg(2+) serves as cofactor.

It catalyses the reaction (2R)-2,3-dihydroxy-3-methylbutanoate + NADP(+) = (2S)-2-acetolactate + NADPH + H(+). The catalysed reaction is (2R,3R)-2,3-dihydroxy-3-methylpentanoate + NADP(+) = (S)-2-ethyl-2-hydroxy-3-oxobutanoate + NADPH + H(+). The protein operates within amino-acid biosynthesis; L-isoleucine biosynthesis; L-isoleucine from 2-oxobutanoate: step 2/4. Its pathway is amino-acid biosynthesis; L-valine biosynthesis; L-valine from pyruvate: step 2/4. In terms of biological role, involved in the biosynthesis of branched-chain amino acids (BCAA). Catalyzes an alkyl-migration followed by a ketol-acid reduction of (S)-2-acetolactate (S2AL) to yield (R)-2,3-dihydroxy-isovalerate. In the isomerase reaction, S2AL is rearranged via a Mg-dependent methyl migration to produce 3-hydroxy-3-methyl-2-ketobutyrate (HMKB). In the reductase reaction, this 2-ketoacid undergoes a metal-dependent reduction by NADPH to yield (R)-2,3-dihydroxy-isovalerate. The sequence is that of Ketol-acid reductoisomerase (NADP(+)) from Pseudomonas aeruginosa (strain LESB58).